Here is a 167-residue protein sequence, read N- to C-terminus: Bacterial non-heme ferritin (167 aa).

A Ferritin-like diiron domain is found at 1-145 (MLSKDIIKLL…DILDKIELIG (145 aa)). Positions 17, 50, 53, 94, and 127 each coordinate Fe cation.

This sequence belongs to the ferritin family. Prokaryotic subfamily. As to quaternary structure, homooligomer of 24 subunits that assemble into a spherical protein shell (12 +/- 1 nM diameter) that can sequester at least 2000 iron atoms.

The protein resides in the cytoplasm. The enzyme catalyses 4 Fe(2+) + O2 + 6 H2O = 4 iron(III) oxide-hydroxide + 12 H(+). Functionally, iron-storage protein. The chain is Bacterial non-heme ferritin (ftnA) from Helicobacter pylori (strain ATCC 700392 / 26695) (Campylobacter pylori).